A 147-amino-acid chain; its full sequence is Large ribosomal subunit protein uL15 (147 aa).

Residues serine 16–arginine 63 are disordered. Positions arginine 23–alanine 33 are enriched in gly residues. Basic residues predominate over residues glycine 34–glycine 47.

Belongs to the universal ribosomal protein uL15 family. As to quaternary structure, part of the 50S ribosomal subunit.

In terms of biological role, binds to the 23S rRNA. The chain is Large ribosomal subunit protein uL15 from Xylella fastidiosa (strain Temecula1 / ATCC 700964).